The sequence spans 321 residues: Epoxyqueuosine reductase (321 aa).

Catalysis depends on D137, which acts as the Proton donor. Residues 179 to 211 (EPLNADPPARSLCGRCSACIDACPTHAIREPFV) enclose the 4Fe-4S ferredoxin-type domain. [4Fe-4S] cluster-binding residues include C191, C194, C197, C201, C217, C245, C248, and C252.

This sequence belongs to the QueG family. Monomer. The cofactor is cob(II)alamin. Requires [4Fe-4S] cluster as cofactor.

Its subcellular location is the cytoplasm. The enzyme catalyses epoxyqueuosine(34) in tRNA + AH2 = queuosine(34) in tRNA + A + H2O. Its pathway is tRNA modification; tRNA-queuosine biosynthesis. Catalyzes the conversion of epoxyqueuosine (oQ) to queuosine (Q), which is a hypermodified base found in the wobble positions of tRNA(Asp), tRNA(Asn), tRNA(His) and tRNA(Tyr). This chain is Epoxyqueuosine reductase, found in Synechococcus sp. (strain CC9605).